The sequence spans 214 residues: Holliday junction branch migration complex subunit RuvA (214 aa).

Residues 1-63 (MISSLRGTVL…EDSLTLFGFP (63 aa)) form a domain I region. The interval 64–139 (GPDELRAFEL…KLFVTQPRAR (76 aa)) is domain II. Positions 139–143 (RSATS) are flexible linker. Positions 144 to 214 (AASTVTADVV…AAPTGQAADR (71 aa)) are domain III.

This sequence belongs to the RuvA family. Homotetramer. Forms an RuvA(8)-RuvB(12)-Holliday junction (HJ) complex. HJ DNA is sandwiched between 2 RuvA tetramers; dsDNA enters through RuvA and exits via RuvB. An RuvB hexamer assembles on each DNA strand where it exits the tetramer. Each RuvB hexamer is contacted by two RuvA subunits (via domain III) on 2 adjacent RuvB subunits; this complex drives branch migration. In the full resolvosome a probable DNA-RuvA(4)-RuvB(12)-RuvC(2) complex forms which resolves the HJ.

It localises to the cytoplasm. Functionally, the RuvA-RuvB-RuvC complex processes Holliday junction (HJ) DNA during genetic recombination and DNA repair, while the RuvA-RuvB complex plays an important role in the rescue of blocked DNA replication forks via replication fork reversal (RFR). RuvA specifically binds to HJ cruciform DNA, conferring on it an open structure. The RuvB hexamer acts as an ATP-dependent pump, pulling dsDNA into and through the RuvAB complex. HJ branch migration allows RuvC to scan DNA until it finds its consensus sequence, where it cleaves and resolves the cruciform DNA. The chain is Holliday junction branch migration complex subunit RuvA from Clavibacter michiganensis subsp. michiganensis (strain NCPPB 382).